Consider the following 567-residue polypeptide: Structural protein ORF567 (567 aa).

Residues 7-393 are disordered; it reads INALLGFPEE…MPIEHKPEQQ (387 aa). Over residues 65 to 79 the composition is skewed to pro residues; sequence TPTPIRPAPPPPPPI. Positions 180–200 are enriched in basic and acidic residues; that stretch reads PKREPEHHTHGSTNNEHESKR. Low complexity predominate over residues 219–231; that stretch reads THQTSPSHSSGGT. Pro residues-rich tracts occupy residues 253–278 and 285–299; these read MPIP…PTPP and TPTP…PPPT. Residues 300–312 are compositionally biased toward low complexity; it reads HGSSSTNSSGSTN. Positions 319-335 are enriched in pro residues; it reads PKPIPIPPTPPPPPPHH. The span at 343 to 353 shows a compositional bias: basic and acidic residues; that stretch reads PKHESEHHDHG. Residues 354–372 show a composition bias toward low complexity; that stretch reads SSSTNSSSSTSNSSSGGTN.

Its subcellular location is the virion. The sequence is that of Structural protein ORF567 from Acidianus two-tailed virus (ATV).